The chain runs to 298 residues: Transcription factor RAX2 (298 aa).

HTH myb-type domains follow at residues 9 to 62 (KANV…LNYL) and 63 to 117 (RPNI…KKKL). 2 consecutive DNA-binding regions (H-T-H motif) follow at residues 38–62 (WIAL…LNYL) and 90–113 (WSVI…NTKL).

In terms of tissue distribution, ubiquitous, with higher levels in roots, flowers, and shoot tips. Found in all cells of the shoot tips.

The protein localises to the nucleus. Transcription activator. Positively regulates axillary meristems (AMs) formation and development, especially during inflorescence. The polypeptide is Transcription factor RAX2 (RAX2) (Arabidopsis thaliana (Mouse-ear cress)).